We begin with the raw amino-acid sequence, 573 residues long: Phosphoenolpyruvate-protein phosphotransferase (573 aa).

H190 acts as the Tele-phosphohistidine intermediate in catalysis. R297 and R333 together coordinate phosphoenolpyruvate. 2 residues coordinate Mg(2+): E432 and D456. Phosphoenolpyruvate contacts are provided by residues 455–456 (ND) and R466. The active-site Proton donor is C503.

Belongs to the PEP-utilizing enzyme family. Homodimer. The cofactor is Mg(2+).

The protein localises to the cytoplasm. It carries out the reaction L-histidyl-[protein] + phosphoenolpyruvate = N(pros)-phospho-L-histidyl-[protein] + pyruvate. Its function is as follows. General (non sugar-specific) component of the phosphoenolpyruvate-dependent sugar phosphotransferase system (sugar PTS). This major carbohydrate active-transport system catalyzes the phosphorylation of incoming sugar substrates concomitantly with their translocation across the cell membrane. Enzyme I transfers the phosphoryl group from phosphoenolpyruvate (PEP) to the phosphoryl carrier protein (HPr). In Priestia megaterium (Bacillus megaterium), this protein is Phosphoenolpyruvate-protein phosphotransferase (ptsI).